Consider the following 239-residue polypeptide: Proteasome activator complex subunit 2 (239 aa).

Ala-2 carries the post-translational modification N-acetylalanine. The residue at position 10 (Ser-10) is a Phosphoserine. Residues 65–87 are disordered; the sequence is DIPIPDPPPKDDEMETDKQEKKE. The span at 72-87 shows a compositional bias: basic and acidic residues; it reads PPKDDEMETDKQEKKE.

This sequence belongs to the PA28 family. In terms of assembly, heterodimer of PSME1 and PSME2, which forms a hexameric ring.

Implicated in immunoproteasome assembly and required for efficient antigen processing. The PA28 activator complex enhances the generation of class I binding peptides by altering the cleavage pattern of the proteasome. This is Proteasome activator complex subunit 2 (Psme2) from Mus musculus (Mouse).